The sequence spans 254 residues: Probable pectate lyase E (254 aa).

The first 17 residues, Met1–Ala17, serve as a signal peptide directing secretion. Asn175 is a glycosylation site (N-linked (GlcNAc...) asparagine). The tract at residues Asn228–Cys254 is disordered.

This sequence belongs to the polysaccharide lyase 3 family. It depends on Ca(2+) as a cofactor.

It localises to the secreted. The enzyme catalyses Eliminative cleavage of (1-&gt;4)-alpha-D-galacturonan to give oligosaccharides with 4-deoxy-alpha-D-galact-4-enuronosyl groups at their non-reducing ends.. Its function is as follows. Pectinolytic enzyme consist of four classes of enzymes: pectin lyase, polygalacturonase, pectin methylesterase and rhamnogalacturonase. Among pectinolytic enzymes, pectin lyase is the most important in depolymerization of pectin, since it cleaves internal glycosidic bonds of highly methylated pectins. Favors pectate, the anion, over pectin, the methyl ester. This is Probable pectate lyase E (plyE) from Aspergillus clavatus (strain ATCC 1007 / CBS 513.65 / DSM 816 / NCTC 3887 / NRRL 1 / QM 1276 / 107).